We begin with the raw amino-acid sequence, 433 residues long: 23S rRNA (uracil(1939)-C(5))-methyltransferase RlmD (433 aa).

The TRAM domain maps to 10-68; sequence RTTTRQIITVSVNDLDSFGQGVARHNGKTLFIPGLLSQENAEVTVTEDKKQYARAKVVR. The [4Fe-4S] cluster site is built by C81, C87, C90, and C162. Residues Q265, F294, N299, E315, N342, and D363 each contribute to the S-adenosyl-L-methionine site. Residue C389 is the Nucleophile of the active site.

It belongs to the class I-like SAM-binding methyltransferase superfamily. RNA M5U methyltransferase family. RlmD subfamily.

It carries out the reaction uridine(1939) in 23S rRNA + S-adenosyl-L-methionine = 5-methyluridine(1939) in 23S rRNA + S-adenosyl-L-homocysteine + H(+). Functionally, catalyzes the formation of 5-methyl-uridine at position 1939 (m5U1939) in 23S rRNA. This chain is 23S rRNA (uracil(1939)-C(5))-methyltransferase RlmD, found in Shigella dysenteriae serotype 1 (strain Sd197).